Reading from the N-terminus, the 188-residue chain is UPF0488 protein C8orf33 homolog (188 aa).

3 disordered regions span residues 1–65 (MAAP…AEAQ), 87–112 (QRPT…TPLP), and 144–182 (AHSA…RDEE). A2 is modified (N-acetylalanine). S41 is subject to Phosphoserine. Residues 166–182 (PRPEGRSKGTSDTRDEE) show a composition bias toward basic and acidic residues.

It belongs to the UPF0488 family.

In Bos taurus (Bovine), this protein is UPF0488 protein C8orf33 homolog.